A 706-amino-acid polypeptide reads, in one-letter code: ATP-dependent DNA helicase HMI1, mitochondrial (706 aa).

Positions threonine 5–threonine 277 constitute a UvrD-like helicase ATP-binding domain. ATP-binding positions include glycine 29–leucine 34 and arginine 275. Residues proline 278–glycine 593 form the UvrD-like helicase C-terminal domain. Positions tyrosine 693–isoleucine 706 are cleaved as a propeptide — cleaved upon import into mitochondrion.

This sequence belongs to the helicase family. UvrD subfamily. Mg(2+) is required as a cofactor.

It is found in the mitochondrion inner membrane. It carries out the reaction Couples ATP hydrolysis with the unwinding of duplex DNA by translocating in the 3'-5' direction.. The catalysed reaction is ATP + H2O = ADP + phosphate + H(+). Its function is as follows. Required for mitochondrial genome maintenance and mitochondrial DNA inheritance. This Saccharomyces cerevisiae (strain ATCC 204508 / S288c) (Baker's yeast) protein is ATP-dependent DNA helicase HMI1, mitochondrial (HMI1).